Here is a 322-residue protein sequence, read N- to C-terminus: Ribose-phosphate pyrophosphokinase (322 aa).

ATP contacts are provided by residues 43–45 (DGE) and 102–103 (RQ). 2 residues coordinate Mg(2+): H137 and D177. Residue K201 is part of the active site. D-ribose 5-phosphate contacts are provided by residues R203, D227, and 231–235 (DTAGT).

The protein belongs to the ribose-phosphate pyrophosphokinase family. Class I subfamily. Homohexamer. Mg(2+) is required as a cofactor.

It is found in the cytoplasm. The enzyme catalyses D-ribose 5-phosphate + ATP = 5-phospho-alpha-D-ribose 1-diphosphate + AMP + H(+). The protein operates within metabolic intermediate biosynthesis; 5-phospho-alpha-D-ribose 1-diphosphate biosynthesis; 5-phospho-alpha-D-ribose 1-diphosphate from D-ribose 5-phosphate (route I): step 1/1. Functionally, involved in the biosynthesis of the central metabolite phospho-alpha-D-ribosyl-1-pyrophosphate (PRPP) via the transfer of pyrophosphoryl group from ATP to 1-hydroxyl of ribose-5-phosphate (Rib-5-P). The protein is Ribose-phosphate pyrophosphokinase of Xylella fastidiosa (strain 9a5c).